A 380-amino-acid chain; its full sequence is Glycogenin-2 (380 aa).

Residues leucine 10, tyrosine 16, and arginine 95 each coordinate UDP. UDP-alpha-D-glucose contacts are provided by leucine 10, tyrosine 16, arginine 95, lysine 104, aspartate 120, alanine 121, aspartate 122, asparagine 158, threonine 159, aspartate 185, aspartate 188, and glutamine 189. Residues aspartate 120, alanine 121, and aspartate 122 each contribute to the UDP site. Aspartate 120 contacts Mn(2+). Aspartate 122 is a binding site for Mn(2+). Tyrosine 230 and tyrosine 232 each carry an O-linked (Glc...) tyrosine glycan. Residues histidine 249, glycine 252, and lysine 255 each contribute to the UDP site. Residue histidine 249 coordinates Mn(2+). UDP-alpha-D-glucose-binding residues include glycine 252 and lysine 255. Residues 331 to 355 (SVDRNASQKSTAEKHDIEKPTSKPQ) form a disordered region. Basic and acidic residues predominate over residues 341-351 (TAEKHDIEKPT). Tyrosine 367 carries an O-linked (Glc...) tyrosine glycan.

It belongs to the glycosyltransferase 8 family. Glycogenin subfamily. As to quaternary structure, interacts with glycogen synthase GSY2. Mn(2+) serves as cofactor.

It is found in the cytoplasm. It localises to the vacuole. The enzyme catalyses L-tyrosyl-[glycogenin] + UDP-alpha-D-glucose = alpha-D-glucosyl-L-tyrosyl-[glycogenin] + UDP + H(+). The catalysed reaction is [1,4-alpha-D-glucosyl](n)-L-tyrosyl-[glycogenin] + UDP-alpha-D-glucose = [1,4-alpha-D-glucosyl](n+1)-L-tyrosyl-[glycogenin] + UDP + H(+). Self-glucosylating initiator of glycogen synthesis. It catalyzes the formation of a short alpha (1,4)-glucosyl chain covalently attached via a glucose 1-O-tyrosyl linkage to internal tyrosine residues and these chains act as primers for the elongation reaction catalyzed by glycogen synthase. Capable of transferring glucosyl residues to unbound acceptors such as free oligoglucans or oligoglucan derivatives. The chain is Glycogenin-2 from Saccharomyces cerevisiae (strain ATCC 204508 / S288c) (Baker's yeast).